We begin with the raw amino-acid sequence, 209 residues long: Chaperone protein TorD (209 aa).

It belongs to the TorD/DmsD family. TorD subfamily.

The protein localises to the cytoplasm. Functionally, involved in the biogenesis of TorA. Acts on TorA before the insertion of the molybdenum cofactor and, as a result, probably favors a conformation of the apoenzyme that is competent for acquiring the cofactor. This chain is Chaperone protein TorD, found in Shewanella baltica (strain OS185).